Consider the following 186-residue polypeptide: Large ribosomal subunit protein uL6 (186 aa).

Belongs to the universal ribosomal protein uL6 family. In terms of assembly, part of the 50S ribosomal subunit.

Functionally, this protein binds to the 23S rRNA, and is important in its secondary structure. It is located near the subunit interface in the base of the L7/L12 stalk, and near the tRNA binding site of the peptidyltransferase center. This chain is Large ribosomal subunit protein uL6, found in Hyperthermus butylicus (strain DSM 5456 / JCM 9403 / PLM1-5).